Here is a 178-residue protein sequence, read N- to C-terminus: MKLLFFFLVLAVSAAVAENAGVQKAFMDIEIDGESAGRIVLELRGDVVPKTVKNFIGLFDKYKGSTFHRVIADFMIQGGDFENHNGTGGHSIYGPRFEDENFTLKHDRGVISMANAGPNTNGSQFFITTVKTEWLDGRHVVFGKITNDSWPTVQAIEALGSSGGRPSKIAKITDIGLL.

The first 17 residues, 1-17, serve as a signal peptide directing secretion; sequence MKLLFFFLVLAVSAAVA. Residues 26 to 177 enclose the PPIase cyclophilin-type domain; sequence FMDIEIDGES…KIAKITDIGL (152 aa).

This sequence belongs to the cyclophilin-type PPIase family. PPIase A subfamily.

It carries out the reaction [protein]-peptidylproline (omega=180) = [protein]-peptidylproline (omega=0). Its function is as follows. PPIases accelerate the folding of proteins. It catalyzes the cis-trans isomerization of proline imidic peptide bonds in oligopeptides. Up-regulates interferon gamma production by bovine T-cells. Stimulates high levels of IFN-gamma production by peripheral blood mononuclear cells and T-cells. The IFN-gamma-inducing effect is blocked by cyclosporin A (CsA). The polypeptide is Peptidyl-prolyl cis-trans isomerase (Neospora caninum (Coccidian parasite)).